The primary structure comprises 167 residues: Homeobox protein EgHBX3 (167 aa).

The homeobox DNA-binding region spans 80-139; that stretch reads SQSKRRVLFNKFQISQLEKRLKQRYLTAQERQELAHTIGLTPTQVKIWFQNHAYKMKRLF.

This sequence belongs to the NK-2 homeobox family.

It localises to the nucleus. The chain is Homeobox protein EgHBX3 (HBX3) from Echinococcus granulosus (Hydatid tapeworm).